The following is a 535-amino-acid chain: GMP synthase [glutamine-hydrolyzing] (535 aa).

The 191-residue stretch at 20-210 folds into the Glutamine amidotransferase type-1 domain; sequence PVLVVDFGAQ…LHRCAALPND (191 aa). Cysteine 97 acts as the Nucleophile in catalysis. Residues histidine 184 and glutamate 186 contribute to the active site. The GMPS ATP-PPase domain maps to 211-409; that stretch reads WDASSIIEDQ…LGLPDEIVWR (199 aa). 238-244 contacts ATP; the sequence is SGGVDSA.

As to quaternary structure, homodimer.

The catalysed reaction is XMP + L-glutamine + ATP + H2O = GMP + L-glutamate + AMP + diphosphate + 2 H(+). It participates in purine metabolism; GMP biosynthesis; GMP from XMP (L-Gln route): step 1/1. In terms of biological role, catalyzes the synthesis of GMP from XMP. The polypeptide is GMP synthase [glutamine-hydrolyzing] (Bifidobacterium longum (strain NCC 2705)).